A 453-amino-acid chain; its full sequence is MYIQMTDGVPPPPEQSSLDHRIDELERQKEIDDWLPITSSRNAKWWYSTFHNVTAMVGAGVLGLPFFMAQLGWGPGIAVLILSWIITLYTLWQMVEMHEMVPGKRFDRYHELGQFAFGERLGLYIIVPQQIIVEVGVCIVYMVTGGQSLKKFHEIACQDCSPIRLSFFIMIFASSHFVLSHLPNFNSISGVSLVAAVMSLSYSTIAWTATAAKGVQEDVQYGYKSGTTASTVLSFFTGLGGIAFAYAGHNVVLEIQATIPSTPSNPSKGPMWRGVVVAYVVVALCYFPVALVGYGVFGNAVLDNVLMSLETPVWAIATANLFVVMHVIGSYQIFAMPVFDMVETFLVKKLNFKPSTVLRFIVRNVYVALTMFIGIMIPFFGGLLAFFGGFAFAPTSYFLPCIMWLLIYKPKRFSLSWWTNWVCIVLGVVLMILSSIGGLRQIIIQSKDYSFFS.

The Cytoplasmic segment spans residues 1 to 44; that stretch reads MYIQMTDGVPPPPEQSSLDHRIDELERQKEIDDWLPITSSRNAK. Helical transmembrane passes span 45 to 65 and 66 to 86; these read WWYS…LGLP and FFMA…SWII. Residues 87-122 are Cytoplasmic-facing; it reads TLYTLWQMVEMHEMVPGKRFDRYHELGQFAFGERLG. A helical membrane pass occupies residues 123–143; the sequence is LYIIVPQQIIVEVGVCIVYMV. At 144–164 the chain is on the extracellular side; it reads TGGQSLKKFHEIACQDCSPIR. A helical membrane pass occupies residues 165–185; that stretch reads LSFFIMIFASSHFVLSHLPNF. The Cytoplasmic portion of the chain corresponds to 186–187; it reads NS. Residues 188–208 form a helical membrane-spanning segment; that stretch reads ISGVSLVAAVMSLSYSTIAWT. Residues 209–231 lie on the Extracellular side of the membrane; that stretch reads ATAAKGVQEDVQYGYKSGTTAST. Residues 232–252 form a helical membrane-spanning segment; the sequence is VLSFFTGLGGIAFAYAGHNVV. Residues 253–276 are Cytoplasmic-facing; the sequence is LEIQATIPSTPSNPSKGPMWRGVV. Residues 277–297 form a helical membrane-spanning segment; the sequence is VAYVVVALCYFPVALVGYGVF. Residues 298–318 lie on the Extracellular side of the membrane; it reads GNAVLDNVLMSLETPVWAIAT. A helical membrane pass occupies residues 319 to 339; that stretch reads ANLFVVMHVIGSYQIFAMPVF. The Cytoplasmic portion of the chain corresponds to 340 to 359; that stretch reads DMVETFLVKKLNFKPSTVLR. A helical membrane pass occupies residues 360 to 382; that stretch reads FIVRNVYVALTMFIGIMIPFFGG. The Extracellular segment spans residues 383 to 385; it reads LLA. The chain crosses the membrane as a helical span at residues 386-408; the sequence is FFGGFAFAPTSYFLPCIMWLLIY. The Cytoplasmic portion of the chain corresponds to 409-412; that stretch reads KPKR. Residues 413-433 form a helical membrane-spanning segment; it reads FSLSWWTNWVCIVLGVVLMIL. Topologically, residues 434–453 are extracellular; the sequence is SSIGGLRQIIIQSKDYSFFS.

The protein belongs to the amino acid/polyamine transporter 2 family. Amino acid/auxin permease (AAAP) (TC 2.A.18.2) subfamily.

It localises to the cell membrane. Functionally, amino acid transporter. The chain is Lysine histidine transporter-like 1 from Arabidopsis thaliana (Mouse-ear cress).